Consider the following 727-residue polypeptide: MAADSREEKDGELNVLDDILTEVPEQDDELYNPESEQDKNEKKGSKRKSDRMESTDTKRQKPSVHSRQLVSKPLSSSVSNNKRIVSTKGKSATEYKNEEYQRSERNKRLDADRKIRLSSSASREPYKNQPEKTCVRKRDPERRAKSPTPDGSERIGLEVDRRASRSSQSSKEEVNSEEYGSDHETGSSGSSDEQGNNTENEEEGVEEDVEEDEEVEEDAEEDEEVDEDGEEEEEEEEEEEEEEEEEEEEYEQDERDQKEEGNDYDTRSEASDSGSESVSFTDGSVRSGSGTDGSDEKKKERKRARGISPIVFDRSGSSASESYAGSEKKHEKLSSSVRAVRKDQTSKLKYVLQDARFFLIKSNNHENVSLAKAKGVWSTLPVNEKKLNLAFRSARSVILIFSVRESGKFQGFARLSSESHHGGSPIHWVLPAGMSAKMLGGVFKIDWICRRELPFTKSAHLTNPWNEHKPVKIGRDGQEIELECGTQLCLLFPPDESIDLYQVIHKMRHKRRMHSQPRSRGRPSRREPVRDVGRRRPEDYDIHNSRKKPRIDYPPEFHQRPGYLKDPRYQEVDRRFSGVRRDVFLNGSYNDYVREFHNMGPPPPWQGMPPYPGMEQPPHHPYYQHHAPPPQAHPPYSGHHPVPHEARYRDKRVHDYDMRVDDFLRRTQAVVSGRRSRPRERDRERERDRPRDNRRDRERDRGRDRERERERLCDRDRDRGERGRYRR.

Residues 1–12 show a composition bias toward basic and acidic residues; that stretch reads MAADSREEKDGE. The segment at 1–338 is disordered; that stretch reads MAADSREEKD…KHEKLSSSVR (338 aa). A Phosphoserine modification is found at S35. Over residues 50-59 the composition is skewed to basic and acidic residues; sequence DRMESTDTKR. Residues 63–90 are compositionally biased toward polar residues; sequence SVHSRQLVSKPLSSSVSNNKRIVSTKGK. A compositionally biased stretch (basic and acidic residues) spans 91–115; that stretch reads SATEYKNEEYQRSERNKRLDADRKI. K96 is covalently cross-linked (Glycyl lysine isopeptide (Lys-Gly) (interchain with G-Cter in SUMO2)). Phosphoserine is present on residues S118 and S120. Basic and acidic residues predominate over residues 124-144; sequence EPYKNQPEKTCVRKRDPERRA. At S146 the chain carries Phosphoserine. At T148 the chain carries Phosphothreonine. Basic and acidic residues-rich tracts occupy residues 151–163 and 170–185; these read GSER…DRRA and SKEE…DHET. Acidic residues predominate over residues 199–254; that stretch reads ENEEEGVEEDVEEDEEVEEDAEEDEEVDEDGEEEEEEEEEEEEEEEEEEEEYEQDE. Residues 255-270 are compositionally biased toward basic and acidic residues; sequence RDQKEEGNDYDTRSEA. Polar residues predominate over residues 280-289; it reads FTDGSVRSGS. Phosphoserine occurs at positions 308, 315, 317, 318, and 320. Residues 315 to 325 show a composition bias toward low complexity; it reads SGSSASESYAG. The YTH domain maps to 355–492; that stretch reads ARFFLIKSNN…ECGTQLCLLF (138 aa). RNA contacts are provided by residues 361-363 and 377-378; these read KSN and WS. A Phosphoserine modification is found at S424. W428 is a binding site for RNA. The residue at position 435 (S435) is a Phosphoserine. D476 contacts RNA. The span at 508 to 523 shows a compositional bias: basic residues; sequence RHKRRMHSQPRSRGRP. 3 disordered regions span residues 508-564, 607-643, and 669-727; these read RHKR…PGYL, GMPP…HPVP, and AVVS…RYRR. Positions 524–564 are enriched in basic and acidic residues; that stretch reads SRREPVRDVGRRRPEDYDIHNSRKKPRIDYPPEFHQRPGYL. S545 is subject to Phosphoserine. The segment covering 679–727 has biased composition (basic and acidic residues); sequence RERDRERERDRPRDNRRDRERDRGRDRERERERLCDRDRDRGERGRYRR.

As to quaternary structure, interacts with SRSF1. Interacts with SRSF2. Interacts with SRSF3. Interacts with SRSF7. Interacts with SRSF10. Interacts with CPSF6. Interacts with KHDRBS1/SAM68. Interacts with TRA2B. Interacts with KHDRBS3. Interacts with EMD. Interacts with RBMX. Interacts with ZCCHC8. Tyrosine phosphorylated.

The protein localises to the nucleus. The protein resides in the nucleus speckle. Its function is as follows. Regulator of alternative splicing that specifically recognizes and binds N6-methyladenosine (m6A)-containing RNAs. M6A is a modification present at internal sites of mRNAs and some non-coding RNAs and plays a role in the efficiency of mRNA splicing, processing and stability. Acts as a key regulator of exon-inclusion or exon-skipping during alternative splicing via interaction with mRNA splicing factors SRSF3 and SRSF10. Specifically binds m6A-containing mRNAs and promotes recruitment of SRSF3 to its mRNA-binding elements adjacent to m6A sites, leading to exon-inclusion during alternative splicing. In contrast, interaction with SRSF3 prevents interaction with SRSF10, a splicing factor that promotes exon skipping: this prevents SRSF10 from binding to its mRNA-binding sites close to m6A-containing regions, leading to inhibit exon skipping during alternative splicing. May also regulate alternative splice site selection. Also involved in nuclear export of m6A-containing mRNAs via interaction with SRSF3: interaction with SRSF3 facilitates m6A-containing mRNA-binding to both SRSF3 and NXF1, promoting mRNA nuclear export. Involved in S-adenosyl-L-methionine homeostasis by regulating expression of MAT2A transcripts, probably by binding m6A-containing MAT2A mRNAs. Also recognizes and binds m6A on other RNA molecules. Involved in random X inactivation mediated by Xist RNA: recognizes and binds m6A-containing Xist and promotes transcription repression activity of Xist. Also recognizes and binds m6A-containing single-stranded DNA. Involved in germline development: required for spermatogonial development in males and oocyte growth and maturation in females, probably via its role in alternative splicing. The sequence is that of YTH domain-containing protein 1 from Homo sapiens (Human).